The following is a 386-amino-acid chain: Succinate--CoA ligase [ADP-forming] subunit beta (386 aa).

Residues lysine 46, glutamate 99, alanine 102, and glutamate 107 each coordinate ATP. Asparagine 199 and aspartate 213 together coordinate Mg(2+). Residues asparagine 264 and 321-323 (GIM) each bind substrate.

Belongs to the succinate/malate CoA ligase beta subunit family. As to quaternary structure, heterotetramer of two alpha and two beta subunits. Requires Mg(2+) as cofactor.

It carries out the reaction succinate + ATP + CoA = succinyl-CoA + ADP + phosphate. The enzyme catalyses GTP + succinate + CoA = succinyl-CoA + GDP + phosphate. Its pathway is carbohydrate metabolism; tricarboxylic acid cycle; succinate from succinyl-CoA (ligase route): step 1/1. Succinyl-CoA synthetase functions in the citric acid cycle (TCA), coupling the hydrolysis of succinyl-CoA to the synthesis of either ATP or GTP and thus represents the only step of substrate-level phosphorylation in the TCA. The beta subunit provides nucleotide specificity of the enzyme and binds the substrate succinate, while the binding sites for coenzyme A and phosphate are found in the alpha subunit. The sequence is that of Succinate--CoA ligase [ADP-forming] subunit beta from Orientia tsutsugamushi (strain Boryong) (Rickettsia tsutsugamushi).